Here is a 397-residue protein sequence, read N- to C-terminus: Phosphoglycerate kinase (397 aa).

Residues Asp25–Asn27, Arg41, His64–Arg67, Arg118, and Arg151 each bind substrate. ATP-binding positions include Lys202, Glu324, and Gly350–Thr353.

It belongs to the phosphoglycerate kinase family. As to quaternary structure, monomer.

Its subcellular location is the cytoplasm. The catalysed reaction is (2R)-3-phosphoglycerate + ATP = (2R)-3-phospho-glyceroyl phosphate + ADP. The protein operates within carbohydrate degradation; glycolysis; pyruvate from D-glyceraldehyde 3-phosphate: step 2/5. The sequence is that of Phosphoglycerate kinase from Paracidovorax citrulli (strain AAC00-1) (Acidovorax citrulli).